Reading from the N-terminus, the 377-residue chain is Opsin-2 (377 aa).

Residues 1 to 57 (MNNQSENYYHGAQFEALKSAGAIEMLGDGLTGDDLAAIPEHWLSYPAPPASAHTALA) are Extracellular-facing. N-linked (GlcNAc...) asparagine glycosylation is present at asparagine 3. Residues 58-78 (LLYIFFTFAALVGNGMVIFIF) form a helical membrane-spanning segment. The Cytoplasmic portion of the chain corresponds to 79 to 89 (STTKSLRTSSN). A helical membrane pass occupies residues 90–110 (FLVLNLAILDFIMMAKAPIFI). Residues 111–126 (YNSAMRGFAVGTVGCQ) are Extracellular-facing. Residues cysteine 125 and cysteine 202 are joined by a disulfide bond. Residues 127–146 (IFALMGAYSGIGAGMTNACI) form a helical membrane-spanning segment. The Cytoplasmic portion of the chain corresponds to 147–166 (AYDRHSTITRPLDGRLSEGK). A helical transmembrane segment spans residues 167-187 (VLLMVAFVWIYSTPWALLPLL). Residues 188–214 (KIWGRYVPEGYLTSCSFDYLTNTFDTK) are Extracellular-facing. Residues 215 to 235 (LFVACIFTCSYVFPMSLIIYF) traverse the membrane as a helical segment. Topologically, residues 236-283 (YSGIVKQVFAHEAALREQAKKMNVESLRANQGGSSESAEIRIAKAALT) are cytoplasmic. The chain crosses the membrane as a helical span at residues 284 to 304 (VCFLFVASWTPYGVMALIGAF). The Extracellular portion of the chain corresponds to 305-314 (GNQQLLTPGV). The helical transmembrane segment at 315 to 335 (TMIPAVACKAVACISPWVYAI) threads the bilayer. The Cytoplasmic portion of the chain corresponds to 336-377 (RHPMYRQELQRRMPWLQIDEPDDTVSTATSNTTNSAPPAATA). The tract at residues 355–377 (EPDDTVSTATSNTTNSAPPAATA) is disordered. Low complexity predominate over residues 361 to 377 (STATSNTTNSAPPAATA).

This sequence belongs to the G-protein coupled receptor 1 family. Opsin subfamily. In the retina, expression is essentially uniformly distributed, but a higher level is seen in the dorsal region of the retina and in the dorsal rim retinulae.

Its subcellular location is the membrane. Functionally, visual pigments are the light-absorbing molecules that mediate vision. They consist of an apoprotein, opsin, covalently linked to cis-retinal. May play a role in photoperiodic photoreception. This is Opsin-2 (OP2) from Manduca sexta (Tobacco hawkmoth).